A 312-amino-acid polypeptide reads, in one-letter code: Glyoxylate/hydroxypyruvate reductase A (312 aa).

Arginine 227 is an active-site residue. The active-site Proton donor is histidine 275.

It belongs to the D-isomer specific 2-hydroxyacid dehydrogenase family. GhrA subfamily.

It localises to the cytoplasm. It carries out the reaction glycolate + NADP(+) = glyoxylate + NADPH + H(+). It catalyses the reaction (R)-glycerate + NAD(+) = 3-hydroxypyruvate + NADH + H(+). The catalysed reaction is (R)-glycerate + NADP(+) = 3-hydroxypyruvate + NADPH + H(+). Its function is as follows. Catalyzes the NADPH-dependent reduction of glyoxylate and hydroxypyruvate into glycolate and glycerate, respectively. The protein is Glyoxylate/hydroxypyruvate reductase A of Salmonella enteritidis PT4 (strain P125109).